A 615-amino-acid chain; its full sequence is MFS-type transporter 1 (615 aa).

Positions M1 to H85 are disordered. The segment covering P16–A53 has biased composition (polar residues). N-linked (GlcNAc...) asparagine glycosylation is present at N25. 6 consecutive transmembrane segments (helical) span residues C94–L114, V138–G158, V162–T182, V192–F212, F222–I242, and F251–L271. Residue N302 is glycosylated (N-linked (GlcNAc...) asparagine). The next 8 helical transmembrane spans lie at W320–V340, Q351–G371, A397–F417, F432–T452, V455–L475, F488–I508, A522–V542, and A585–L605.

This sequence belongs to the major facilitator superfamily. EmrB family.

It localises to the membrane. In terms of biological role, MFS-type transporter; part of the gene cluster that mediates the biosynthesis of pyriculol and pyriculariol, two heptaketides that induce lesion formation upon application on rice leaves but are dispensable for pathogenicity. With the ABC transporter ABC7, is most likely responsible for pyriculol and pyriculariol secretion and thereby may contribute to intrinsic resistance. This chain is MFS-type transporter 1, found in Pyricularia oryzae (strain 70-15 / ATCC MYA-4617 / FGSC 8958) (Rice blast fungus).